The sequence spans 327 residues: WRKY transcription factor WRKY76 (327 aa).

Positions 56 to 76 (AKIVEAKVTQMSEENRRLTEV) form a coiled coil. The segment at 87–135 (RLGLDGSASPPRPVSPLSGKKRSRESMETANSCDANSNRHQGGDADHAE) is disordered. A Nuclear localization signal motif is present at residues 106–112 (KKRSRES). The segment covering 114–126 (ETANSCDANSNRH) has biased composition (polar residues). A DNA-binding region (WRKY) is located at residues 160 to 226 (DTSLVVKDGY…YEGEHNHPHP (67 aa)).

This sequence belongs to the WRKY group II-a family.

It is found in the nucleus. Transcription repressor. Interacts specifically with the W box (5'-(T)TGAC[CT]-3'), a frequently occurring elicitor-responsive cis-acting element. Regulates, probably indirectly, the activation of defense-related genes during defense response. Modulates plant innate immunity against X.oryzae pv. oryzae (Xoo). The polypeptide is WRKY transcription factor WRKY76 (Oryza sativa subsp. japonica (Rice)).